The chain runs to 317 residues: Acetyl-coenzyme A carboxylase carboxyl transferase subunit alpha (317 aa).

The CoA carboxyltransferase C-terminal domain maps to 33–294 (NINKEINCLR…KNRILKDLKE (262 aa)).

It belongs to the AccA family. As to quaternary structure, acetyl-CoA carboxylase is a heterohexamer composed of biotin carboxyl carrier protein (AccB), biotin carboxylase (AccC) and two subunits each of ACCase subunit alpha (AccA) and ACCase subunit beta (AccD).

The protein resides in the cytoplasm. It catalyses the reaction N(6)-carboxybiotinyl-L-lysyl-[protein] + acetyl-CoA = N(6)-biotinyl-L-lysyl-[protein] + malonyl-CoA. Its pathway is lipid metabolism; malonyl-CoA biosynthesis; malonyl-CoA from acetyl-CoA: step 1/1. In terms of biological role, component of the acetyl coenzyme A carboxylase (ACC) complex. First, biotin carboxylase catalyzes the carboxylation of biotin on its carrier protein (BCCP) and then the CO(2) group is transferred by the carboxyltransferase to acetyl-CoA to form malonyl-CoA. The polypeptide is Acetyl-coenzyme A carboxylase carboxyl transferase subunit alpha (Wigglesworthia glossinidia brevipalpis).